We begin with the raw amino-acid sequence, 556 residues long: Formate--tetrahydrofolate ligase (556 aa).

Position 65-72 (threonine 65–serine 72) interacts with ATP.

It belongs to the formate--tetrahydrofolate ligase family.

The catalysed reaction is (6S)-5,6,7,8-tetrahydrofolate + formate + ATP = (6R)-10-formyltetrahydrofolate + ADP + phosphate. The protein operates within one-carbon metabolism; tetrahydrofolate interconversion. The sequence is that of Formate--tetrahydrofolate ligase from Streptococcus agalactiae serotype III (strain NEM316).